The chain runs to 876 residues: DNA polymerase I (876 aa).

One can recognise a 5'-3' exonuclease domain in the interval 1–310 (MKNKLVLIDG…FAIADSVTDE (310 aa)). Residues 289-876 (TDEGEKPLAG…HYGPTWYDAK (588 aa)) are subtilisin large fragment. Positions 469–876 (EQDRLLTELE…HYGPTWYDAK (408 aa)) are polymerase.

The protein belongs to the DNA polymerase type-A family. Single-chain monomer with multiple functions.

It catalyses the reaction DNA(n) + a 2'-deoxyribonucleoside 5'-triphosphate = DNA(n+1) + diphosphate. In terms of biological role, in addition to polymerase activity, the recombinant enzyme has strand displacement and 5'-3' exonuclease activity, but lacks proofreading 3'-5' exonuclease activity. The sequence is that of DNA polymerase I (polA) from Geobacillus stearothermophilus (Bacillus stearothermophilus).